The primary structure comprises 37 residues: Large ribosomal subunit protein bL36 (37 aa).

The protein belongs to the bacterial ribosomal protein bL36 family.

The protein is Large ribosomal subunit protein bL36 of Mycoplasmopsis synoviae (strain 53) (Mycoplasma synoviae).